A 212-amino-acid polypeptide reads, in one-letter code: Phosphoribosylglycinamide formyltransferase (212 aa).

11–13 (GSN) is a N(1)-(5-phospho-beta-D-ribosyl)glycinamide binding site. (6R)-10-formyltetrahydrofolate-binding positions include Arg-64, 89–92 (MRIL), and Asn-106. The active-site Proton donor is the His-108. 140–144 (TDELD) is a (6R)-10-formyltetrahydrofolate binding site. A N(1)-(5-phospho-beta-D-ribosyl)glycinamide-binding site is contributed by 170–173 (QTQE).

Belongs to the GART family. As to quaternary structure, monomer. Homodimer below pH 6.8.

The enzyme catalyses N(1)-(5-phospho-beta-D-ribosyl)glycinamide + (6R)-10-formyltetrahydrofolate = N(2)-formyl-N(1)-(5-phospho-beta-D-ribosyl)glycinamide + (6S)-5,6,7,8-tetrahydrofolate + H(+). It functions in the pathway purine metabolism; IMP biosynthesis via de novo pathway; N(2)-formyl-N(1)-(5-phospho-D-ribosyl)glycinamide from N(1)-(5-phospho-D-ribosyl)glycinamide (10-formyl THF route): step 1/1. Inhibited by N10-(bromoacetyl)-5,8-dideazafolate. Functionally, catalyzes the transfer of a formyl group from 10-formyltetrahydrofolate to 5-phospho-ribosyl-glycinamide (GAR), producing 5-phospho-ribosyl-N-formylglycinamide (FGAR) and tetrahydrofolate. This is Phosphoribosylglycinamide formyltransferase from Escherichia coli (strain K12).